Reading from the N-terminus, the 617-residue chain is MDFSKLPKIRDEDKESTFGYVHGVSGPVVTACDMAGAAMYELVRVGHSELVGEIIRLEGDMATIQVYEETSGVSVGDPVLRTGKPLSVELGPGIMGAIFDGIQRPLSDISSQTQSIYIPRGVNVSALSRDIKWEFIPSKNLRVGSHITGGDIYGIVNENSLIKHKIMLPPRNRGSVTYIAPPGNYDASDVVLELEFEGVKEKFSMVQVWPVRQVRPVTEKLPANHPLLTGQRVLDALFPCVQGGTTAIPGAFGCGKTVISQSLSKYSNSDVIIYVGCGERGNEMSEVLRDFPELTMEVDGKVESIMKRTALVANTSNMPVAAREASIYTGITLSEYFRDMGYHVSMMADSTSRWAEALREISGRLAEMPADSGYPAYLGARLASFYERAGRVKCLGNPEREGSVSIVGAVSPPGGDFSDPVTSATLGIVQVFWGLDKKLAQRKHFPSVNWLISYSKYMRALDEYYDKHFTEFVPLRTKAKEILQEEEDLAEIVQLVGKASLAETDKITLEVAKLIKDDFLQQNGYTPYDRFCPFYKTVGMLSNMISFYDMARRAVETTAQSDNKITWSIIREHMGEILYKLSSMKFKDPVKDGEAKIKADYAQLLEDMQNAFRSLED.

Position 250–257 (250–257 (GAFGCGKT)) interacts with ATP. Phosphoserine; by AMPK is present on S384.

The protein belongs to the ATPase alpha/beta chains family. In terms of assembly, V-ATPase is a heteromultimeric enzyme made up of two complexes: the ATP-hydrolytic V1 complex and the proton translocation V0 complex. The V1 complex consists of three catalytic AB heterodimers that form a heterohexamer, three peripheral stalks each consisting of EG heterodimers, one central rotor including subunits D and F, and the regulatory subunits C and H. The proton translocation complex V0 consists of the proton transport subunit a, a ring of proteolipid subunits c9c'', rotary subunit d, subunits e and f, and the accessory subunits ATP6AP1/Ac45 and ATP6AP2/PRR. Interacts with the V0 complex V-ATPase subunit a4 ATP6V0A4. Interacts with WFS1. Interacts with alpha-crystallin B chain/CRYAB and with MTOR, forming a ternary complex. Phosphorylation at Ser-384 by AMPK down-regulates its enzyme activity.

It localises to the cytoplasm. The protein localises to the cytosol. The protein resides in the cytoplasmic vesicle. Its subcellular location is the secretory vesicle. It is found in the clathrin-coated vesicle membrane. It localises to the lysosome. It catalyses the reaction ATP + H2O + 4 H(+)(in) = ADP + phosphate + 5 H(+)(out). With respect to regulation, ATP hydrolysis occurs at the interface between the nucleotide-binding domains of subunits A and B. ATP hydrolysis triggers a conformational change in the subunits D and F, which induces a shift of subunit d. The c-ring is subsequently rotated and results in a continuous proton translocation across the membrane. Its function is as follows. Catalytic subunit of the V1 complex of vacuolar(H+)-ATPase (V-ATPase), a multisubunit enzyme composed of a peripheral complex (V1) that hydrolyzes ATP and a membrane integral complex (V0) that translocates protons. V-ATPase is responsible for acidifying and maintaining the pH of intracellular compartments and in some cell types, is targeted to the plasma membrane, where it is responsible for acidifying the extracellular environment. In aerobic conditions, involved in intracellular iron homeostasis, thus triggering the activity of Fe(2+) prolyl hydroxylase (PHD) enzymes, and leading to HIF1A hydroxylation and subsequent proteasomal degradation. May play a role in neurite development and synaptic connectivity. The chain is V-type proton ATPase catalytic subunit A (Atp6v1a) from Mus musculus (Mouse).